We begin with the raw amino-acid sequence, 305 residues long: Serine/threonine-protein kinase 16 (305 aa).

Glycine 2 is lipidated: N-myristoyl glycine. Residues cysteine 6 and cysteine 8 are each lipidated (S-palmitoyl cysteine). Residues 20–293 (YLFVQKLGEG…PVLLSQLEAL (274 aa)) enclose the Protein kinase domain. Residues 26–34 (LGEGGFSYV) and lysine 49 contribute to the ATP site. Residue aspartate 148 is the Proton acceptor of the active site. An activation loop region spans residues 166 to 202 (DLGSMNQACIQVEGSRQALALQDWAAQRCTISYRAPE). Serine 197 carries the phosphoserine; by autocatalysis modification. Tyrosine 198 carries the phosphotyrosine; by autocatalysis modification.

The protein belongs to the protein kinase superfamily. Ser/Thr protein kinase family. Monomer. Interacts with DRG1 (via its N-terminal); the interaction phosphorylates DRG1. Mainly autophosphorylated on serine/threonine residues. Also autophosphorylated on Tyr-198. As to expression, ubiquitously expressed at low levels. Relatively higher levels in testis, kidney and liver.

It localises to the cytoplasm. The protein localises to the perinuclear region. It is found in the membrane. The enzyme catalyses L-seryl-[protein] + ATP = O-phospho-L-seryl-[protein] + ADP + H(+). It carries out the reaction L-threonyl-[protein] + ATP = O-phospho-L-threonyl-[protein] + ADP + H(+). The catalysed reaction is L-tyrosyl-[protein] + ATP = O-phospho-L-tyrosyl-[protein] + ADP + H(+). Membrane-associated protein kinase that phosphorylates on serine and threonine residues. In vitro substrates include DRG1, ENO1 and EIF4EBP1. Also autophosphorylates. May be involved in secretory vesicle trafficking or intracellular signaling. May have a role in regulating stromal-epithelial interactions that occur during ductal morphogenesis in the mammary gland. May be involved in TGF-beta signaling. Able to autophosphorylate on Tyr residue; it is however unclear whether it has tyrosine-protein kinase toward other proteins. This chain is Serine/threonine-protein kinase 16 (Stk16), found in Mus musculus (Mouse).